We begin with the raw amino-acid sequence, 378 residues long: E3 ubiquitin-protein ligase ATL9 (378 aa).

The first 33 residues, 1–33 (MAILDTKSSRWIPHNLLFLLLLLLLQSVPYGFG), serve as a signal peptide directing secretion. A helical membrane pass occupies residues 51–71 (VVVVITVLFLVIFFMVFGSIF). Residues 135–177 (CAVCLCEFEDDETLRLMPPCCHVFHADCVDVWLSEHSTCPLCR) form an RING-type; atypical zinc finger. Disordered regions lie at residues 187 to 211 (DDDD…DPER), 300 to 326 (ARSS…RKSN), and 350 to 378 (FSGD…DERV). The span at 193–207 (ESYSGTDPGTISSST) shows a compositional bias: polar residues. A compositionally biased stretch (low complexity) spans 301 to 317 (RSSRSGYRSGSVGSERS). Residues 364 to 378 (AGERSFERLRPDERV) are compositionally biased toward basic and acidic residues.

The protein belongs to the RING-type zinc finger family. ATL subfamily.

It is found in the membrane. It carries out the reaction S-ubiquitinyl-[E2 ubiquitin-conjugating enzyme]-L-cysteine + [acceptor protein]-L-lysine = [E2 ubiquitin-conjugating enzyme]-L-cysteine + N(6)-ubiquitinyl-[acceptor protein]-L-lysine.. Its pathway is protein modification; protein ubiquitination. Functionally, E3 ubiquitin-protein ligase able to catalyze polyubiquitination with ubiquitin-conjugating enzyme E2 UBC8 in vitro. May be involved in the early steps of the plant defense signaling pathway. The chain is E3 ubiquitin-protein ligase ATL9 (ATL9) from Arabidopsis thaliana (Mouse-ear cress).